We begin with the raw amino-acid sequence, 98 residues long: NADH-ubiquinone oxidoreductase chain 4L (98 aa).

Transmembrane regions (helical) follow at residues 1–21 (MTPV…GLAF), 29–49 (ALLC…LWAL), and 59–79 (APML…ALLV).

The protein belongs to the complex I subunit 4L family.

Its subcellular location is the mitochondrion membrane. The catalysed reaction is a ubiquinone + NADH + 5 H(+)(in) = a ubiquinol + NAD(+) + 4 H(+)(out). In terms of biological role, core subunit of the mitochondrial membrane respiratory chain NADH dehydrogenase (Complex I) which catalyzes electron transfer from NADH through the respiratory chain, using ubiquinone as an electron acceptor. Part of the enzyme membrane arm which is embedded in the lipid bilayer and involved in proton translocation. This is NADH-ubiquinone oxidoreductase chain 4L (MT-ND4L) from Carassius auratus (Goldfish).